The following is a 446-amino-acid chain: Transcriptional adapter 2-alpha (446 aa).

A ZZ-type zinc finger spans residues 12 to 69 (FDKPPCRGCSSYLTEPYVKCAECGPPPFLLCLQCFTRGFEYKKHQSDHTYEIMTSDFP). Zn(2+) is bound by residues Cys17, Cys20, Cys31, Cys34, Cys42, Cys45, His55, and His59. Residues 70–122 (VLDPNWTAQEEMALLEAVMDCGFGNWQDVANQMCTKSKEECEKHYMKHFINNP) form the SANT domain. A disordered region spans residues 345–375 (DIDSGPTPAAPIPSNSGRRSAPPLNLTGLPG). The 88-residue stretch at 359–446 (NSGRRSAPPL…LIREGYITKA (88 aa)) folds into the SWIRM domain. A DNA-binding region spans residues 429-438 (KTRKIYDFLI).

The protein resides in the nucleus. It localises to the chromosome. Its function is as follows. Component of some complex with histone acetyltransferase activity. Required for the function of some acidic activation domains, which activate transcription from a distant site. Binds double-stranded DNA. Binds dinucleosomes, probably at the linker region between neighboring nucleosomes. Plays a role in chromatin remodeling. This Gallus gallus (Chicken) protein is Transcriptional adapter 2-alpha (TADA2A).